The chain runs to 69 residues: Omega-oxotoxin-Ol1a (69 aa).

The 68-residue stretch at 1-68 (DWECLPLHSS…GKINTCDKYK (68 aa)) folds into the Oxytoxin-type inhibitor cystine knot (ICK) domain. 5 disulfides stabilise this stretch: Cys4-Cys18, Cys11-Cys23, Cys15-Cys64, Cys17-Cys52, and Cys25-Cys50. Asparagine amide is present on Asn69.

It belongs to the spiderine family. Spiderine subfamily. In terms of tissue distribution, expressed by the venom gland.

Its subcellular location is the secreted. Functionally, weak blocker of vertebrate P/Q-, N- and L-type voltage-gated calcium channels (Cav1 and Cav2). Is both paralytic and lethal when injected into lepidopteran larvae. Is not toxic to mice. The sequence is that of Omega-oxotoxin-Ol1a from Oxyopes lineatus (Lynx spider).